We begin with the raw amino-acid sequence, 810 residues long: Transmembrane GTPase Marf (810 aa).

At 1–637 the chain is on the cytoplasmic side; it reads MAAYLNRTIS…TTTPVEATPV (637 aa). Phosphothreonine is present on T8. Residues 13-40 are disordered; that stretch reads TGQTGPADDDRHASSTDTVDKSGPGSPL. Residues 20–32 show a composition bias toward basic and acidic residues; it reads DDDRHASSTDTVD. Residue S38 is modified to Phosphoserine. Positions 134–382 constitute a Dynamin-type G domain; sequence QRDHMKVAFF…IRYFEFQDFE (249 aa). The interval 144-151 is G1 motif; it reads GRTSNGKS. Residue 147 to 152 participates in GTP binding; sequence SNGKSS. A G2 motif region spans residues 170–171; the sequence is TT. The interval 239–242 is G3 motif; sequence DSPG. Residue 298–301 coordinates GTP; that stretch reads NRWD. Residues 298 to 301 form a G4 motif region; sequence NRWD. Position 327 (K327) is a region of interest, G5 motif. S345 serves as a coordination point for GTP. Residues 427–476 adopt a coiled-coil conformation; sequence RNLKQDQKNLLTERIQGTETQMMQVTREMKMKIHNMVEEVEEKVSKALNE. A Phosphothreonine modification is found at T553. A Phosphoserine modification is found at S554. A Phosphothreonine modification is found at T555. The tract at residues 609–630 is disordered; the sequence is GQPALVNRQSSIGHSVSTPTTT. A helical transmembrane segment spans residues 638–648; it reads CLLPAPVVAGI. Residues 649 to 668 are Mitochondrial intermembrane-facing; sequence TPEQLSLISRFAVSSIGSQG. A helical transmembrane segment spans residues 669–689; the sequence is TVGGLVVAGVMLKTIGWRVLV. Residues 690–810 are Cytoplasmic-facing; it reads GVGALYGCIY…IFEHNYISPQ (121 aa). Residues 759 to 806 adopt a coiled-coil conformation; the sequence is TATTDMNDELKTLDSQLNILEANQKQLKLLRNKANYIQNELDIFEHNY.

The protein belongs to the TRAFAC class dynamin-like GTPase superfamily. Dynamin/Fzo/YdjA family. Mitofusin subfamily. Interacts with Mul1. In terms of processing, ubiquitinated by park and Mul1. Ubiquitinated, probably by HUWE1, when dietary stearate (C18:0) levels are low; ubiquitination inhibits mitochondrial fusion. As to expression, widely expressed in embryos, accumulating in the mesoderm and endoderm during gut development. In the male germ line, it is expressed in spermatogonia, spermatocytes and early spermatids.

Its subcellular location is the mitochondrion outer membrane. The enzyme catalyses GTP + H2O = GDP + phosphate + H(+). Its function is as follows. Mitochondrial outer membrane GTPase that mediates mitochondrial clustering and fusion. Mitochondrial fusion is the physical merging of mitochondria that gives rise to mitochondrial networks, and this process is counterbalanced by mitochondrial fission which fragments networks. Promotes, but is not required for park recruitment to dysfunctional mitochondria. The chain is Transmembrane GTPase Marf (Marf) from Drosophila melanogaster (Fruit fly).